Here is a 304-residue protein sequence, read N- to C-terminus: Acetyl-coenzyme A carboxylase carboxyl transferase subunit beta (304 aa).

Residues 23–292 (VWTKCDSCGQ…PNPEAPREGV (270 aa)) form the CoA carboxyltransferase N-terminal domain. The Zn(2+) site is built by Cys27, Cys30, Cys46, and Cys49. The C4-type zinc finger occupies 27–49 (CDSCGQVLYRAELERNLEVCPKC). The tract at residues 284–304 (NPEAPREGVVVPPVPDQEPEA) is disordered. A compositionally biased stretch (pro residues) spans 295 to 304 (PPVPDQEPEA).

Belongs to the AccD/PCCB family. In terms of assembly, acetyl-CoA carboxylase is a heterohexamer composed of biotin carboxyl carrier protein (AccB), biotin carboxylase (AccC) and two subunits each of ACCase subunit alpha (AccA) and ACCase subunit beta (AccD). The cofactor is Zn(2+).

The protein localises to the cytoplasm. It catalyses the reaction N(6)-carboxybiotinyl-L-lysyl-[protein] + acetyl-CoA = N(6)-biotinyl-L-lysyl-[protein] + malonyl-CoA. It functions in the pathway lipid metabolism; malonyl-CoA biosynthesis; malonyl-CoA from acetyl-CoA: step 1/1. Functionally, component of the acetyl coenzyme A carboxylase (ACC) complex. Biotin carboxylase (BC) catalyzes the carboxylation of biotin on its carrier protein (BCCP) and then the CO(2) group is transferred by the transcarboxylase to acetyl-CoA to form malonyl-CoA. This Escherichia coli O6:K15:H31 (strain 536 / UPEC) protein is Acetyl-coenzyme A carboxylase carboxyl transferase subunit beta.